A 543-amino-acid chain; its full sequence is Excitatory amino acid transporter 1 (543 aa).

At 1–47 (MTKSNGEDPRAGSRMERFQQGVRQRTLLAKKKVQNITKDDVKGFLKR) the chain is on the cytoplasmic side. The chain crosses the membrane as a helical span at residues 48–68 (NGFVLFTVIAVVVGSILGFSV). The Extracellular portion of the chain corresponds to 69–86 (RSYHMTFRELKYFSFPGE). A helical transmembrane segment spans residues 87-108 (LLMRMLQMLVLPLIVSSLVTGM). The Cytoplasmic segment spans residues 109–122 (AALDSKASGKMGLR). The chain crosses the membrane as a helical span at residues 123 to 145 (AVVYYMTTTVIAVFIGIVIVIIV). Residues 146-237 (HPGKGTKEHM…MREEMIPVPG (92 aa)) lie on the Extracellular side of the membrane. Asparagine 206 and asparagine 217 each carry an N-linked (GlcNAc...) asparagine glycan. Residues 238-261 (AVNGVNALGLVVFSMCFGLVIGNM) form a helical membrane-spanning segment. Residues 262-270 (KEQGKALKD) lie on the Cytoplasmic side of the membrane. The chain crosses the membrane as a helical span at residues 271–298 (FFDSLNEAIMRLVAVIMWYAPIGILFLI). At 299–319 (AGKIAEMEDMGVVGGQLGMYT) the chain is on the extracellular side. Residues 320–341 (VTVIIGLLIHAVIVLPLLYFAV) form a helical membrane-spanning segment. The Cytoplasmic segment spans residues 342 to 346 (TRKNP). An intramembrane region (discontinuously helical) is located at residues 347–377 (WVFIGGILQALITALGTSSSSATLPITFKCL). 364-366 (SSS) provides a ligand contact to L-aspartate. Over 378–386 (EENNKVDKR) the chain is Cytoplasmic. A helical transmembrane segment spans residues 387–413 (VTRFVLPVGATINMDGTALYEALAAIF). Na(+)-binding residues include glycine 395, threonine 397, and asparagine 399. L-aspartate is bound at residue threonine 403. The Extracellular segment spans residues 414–426 (IAQVNNYDLNFGQ). An intramembrane region (discontinuously helical) is located at residues 427 to 460 (ILTISITATAASIGAAGIPQAGLVTMVIVLTSVG). 444–448 (IPQAG) is a binding site for L-aspartate. The Extracellular segment spans residues 461-473 (LPTDDITLIIAVD). The helical transmembrane segment at 474-495 (WFLDRLRTTTNVLGDSLGAGIV) threads the bilayer. Residues aspartate 477 and asparagine 484 each coordinate L-aspartate. Na(+) contacts are provided by asparagine 484 and aspartate 488. At 496 to 543 (EHLSRHELQSGDAEMGNSVIEENEMKKPYQLVSQENELEKPIDSETKM) the chain is on the cytoplasmic side. The segment at 521–543 (KKPYQLVSQENELEKPIDSETKM) is disordered. Basic and acidic residues predominate over residues 532-543 (ELEKPIDSETKM).

Belongs to the dicarboxylate/amino acid:cation symporter (DAACS) (TC 2.A.23) family. Homotrimer. In terms of tissue distribution, detected in retina (at protein level).

Its subcellular location is the cell membrane. It catalyses the reaction K(+)(in) + L-glutamate(out) + 3 Na(+)(out) + H(+)(out) = K(+)(out) + L-glutamate(in) + 3 Na(+)(in) + H(+)(in). The enzyme catalyses K(+)(in) + L-aspartate(out) + 3 Na(+)(out) + H(+)(out) = K(+)(out) + L-aspartate(in) + 3 Na(+)(in) + H(+)(in). The catalysed reaction is D-aspartate(out) + K(+)(in) + 3 Na(+)(out) + H(+)(out) = D-aspartate(in) + K(+)(out) + 3 Na(+)(in) + H(+)(in). In terms of biological role, sodium-dependent, high-affinity amino acid transporter that mediates the uptake of L-glutamate and also L-aspartate and D-aspartate. Functions as a symporter that transports one amino acid molecule together with two or three Na(+) ions and one proton, in parallel with the counter-transport of one K(+) ion. Plays a redundant role in the rapid removal of released glutamate from the synaptic cleft, which is essential for terminating the postsynaptic action of glutamate. This is Excitatory amino acid transporter 1 (SLC1A3) from Ambystoma tigrinum (Eastern tiger salamander).